Consider the following 568-residue polypeptide: Dual specificity tyrosine-phosphorylation-regulated kinase 3 (568 aa).

The segment at 1 to 168 (MKWKEKLGDG…HGVIGGPNNG (168 aa)) is disordered. Positions 77–114 (SNTVQSDGISDSEKCSPTVSQGKSSDCLNTVKSNSSSK) are enriched in polar residues. Positions 189-502 (YEVLKIIGKG…PAQALRHPWI (314 aa)) constitute a Protein kinase domain. ATP-binding positions include 195 to 203 (IGKGSFGQV) and Lys-218. Residue Asp-315 is the Proton acceptor of the active site. Phosphoserine is present on Ser-330. Tyr-349 is subject to Phosphotyrosine. A Nuclear localization signal motif is present at residues 448 to 461 (RSRRGKKRGPPGSK).

The protein belongs to the protein kinase superfamily. CMGC Ser/Thr protein kinase family. MNB/DYRK subfamily. In terms of assembly, interacts with SIRT1. The cofactor is Mg(2+). Post-translationally, protein kinase activity is activated following autophosphorylation at Tyr-349. Autophosphorylation at Ser-330 stabilizes the protein and enhances the protein kinase activity. In terms of processing, ubiquitinated at anaphase by the anaphase-promoting complex (APC/C), leading to its degradation by the proteasome.

The protein resides in the nucleus. Its subcellular location is the cytoplasm. It localises to the nucleus speckle. The protein localises to the cytoplasmic granule. It is found in the cytoskeleton. The protein resides in the microtubule organizing center. Its subcellular location is the centrosome. It carries out the reaction L-seryl-[protein] + ATP = O-phospho-L-seryl-[protein] + ADP + H(+). The enzyme catalyses L-threonyl-[protein] + ATP = O-phospho-L-threonyl-[protein] + ADP + H(+). The catalysed reaction is L-tyrosyl-[protein] + ATP = O-phospho-L-tyrosyl-[protein] + ADP + H(+). Protein kinase activity is activated following autophosphorylation at Tyr-349. Dual-specificity protein kinase that promotes disassembly of several types of membraneless organelles during mitosis, such as stress granules, nuclear speckles and pericentriolar material. Dual-specificity tyrosine-regulated kinases (DYRKs) autophosphorylate a critical tyrosine residue in their activation loop and phosphorylate their substrate on serine and threonine residues. Acts as a central dissolvase of membraneless organelles during the G2-to-M transition, after the nuclear-envelope breakdown: acts by mediating phosphorylation of multiple serine and threonine residues in unstructured domains of proteins, such as SRRM1 and PCM1. Does not mediate disassembly of all membraneless organelles: disassembly of P-body and nucleolus is not regulated by DYRK3. Dissolution of membraneless organelles at the onset of mitosis is also required to release mitotic regulators, such as ZNF207, from liquid-unmixed organelles where they are sequestered and keep them dissolved during mitosis. Regulates mTORC1 by mediating the dissolution of stress granules: during stressful conditions, DYRK3 partitions from the cytosol to the stress granule, together with mTORC1 components, which prevents mTORC1 signaling. When stress signals are gone, the kinase activity of DYRK3 is required for the dissolution of stress granule and mTORC1 relocation to the cytosol: acts by mediating the phosphorylation of the mTORC1 inhibitor AKT1S1, allowing full reactivation of mTORC1 signaling. Also acts as a negative regulator of EPO-dependent erythropoiesis: may place an upper limit on red cell production during stress erythropoiesis. Inhibits cell death due to cytokine withdrawal in hematopoietic progenitor cells. Promotes cell survival upon genotoxic stress through phosphorylation of SIRT1: this in turn inhibits p53/TP53 activity and apoptosis. In Macaca fascicularis (Crab-eating macaque), this protein is Dual specificity tyrosine-phosphorylation-regulated kinase 3.